A 414-amino-acid chain; its full sequence is Serpin A3-6 (414 aa).

The first 25 residues, M1–C25, serve as a signal peptide directing secretion. 5 N-linked (GlcNAc...) asparagine glycosylation sites follow: N103, N183, N233, N267, and N321.

This sequence belongs to the serpin family. As to quaternary structure, homodimer.

It localises to the cytoplasmic vesicle. The protein localises to the secretory vesicle. It is found in the chromaffin granule. Its subcellular location is the secreted. Functionally, serine protease inhibitor. The polypeptide is Serpin A3-6 (Bos taurus (Bovine)).